We begin with the raw amino-acid sequence, 152 residues long: MESNIILVVILGISIVGKATSVAISVAALLILKLLGLDKYIFPYLNDKGMFWGLVLLTAAILIPIAQGNVKAIDIKNNLVSFVGITALVLSFLTTYLSGVGLRYLTVQGHSDVMPSLILGSVAAAAFLGGVPVGPLITSGILALLVKMVKKS.

4 helical membrane-spanning segments follow: residues Ile-5–Ser-25, Met-50–Val-70, Phe-82–Leu-102, and Leu-117–Ile-137.

The protein belongs to the UPF0756 family.

It is found in the cell membrane. This chain is UPF0756 membrane protein CA_C0092, found in Clostridium acetobutylicum (strain ATCC 824 / DSM 792 / JCM 1419 / IAM 19013 / LMG 5710 / NBRC 13948 / NRRL B-527 / VKM B-1787 / 2291 / W).